The chain runs to 274 residues: NAD-dependent protein deacylase (274 aa).

The Deacetylase sirtuin-type domain occupies 4–274 (CLLPSSDMDA…GELLPKALAP (271 aa)). 29 to 48 (GAGVSAESGVPTFRGAGGLW) lines the NAD(+) pocket. Substrate-binding residues include tyrosine 73 and arginine 76. 111–114 (QNID) lines the NAD(+) pocket. Histidine 129 acts as the Proton acceptor in catalysis. 4 residues coordinate Zn(2+): cysteine 137, cysteine 140, cysteine 178, and cysteine 183. NAD(+)-binding positions include 220 to 222 (GTS), 246 to 248 (NME), and cysteine 264.

It belongs to the sirtuin family. Class III subfamily. Zn(2+) is required as a cofactor.

Its subcellular location is the mitochondrion. It catalyses the reaction N(6)-malonyl-L-lysyl-[protein] + NAD(+) + H2O = 2''-O-malonyl-ADP-D-ribose + nicotinamide + L-lysyl-[protein]. The enzyme catalyses N(6)-succinyl-L-lysyl-[protein] + NAD(+) + H2O = 2''-O-succinyl-ADP-D-ribose + nicotinamide + L-lysyl-[protein]. The catalysed reaction is N(6)-glutaryl-L-lysyl-[protein] + NAD(+) + H2O = 2''-O-glutaryl-ADP-D-ribose + nicotinamide + L-lysyl-[protein]. Functionally, NAD-dependent lysine demalonylase, desuccinylase and deglutarylase that specifically removes malonyl, succinyl and glutaryl groups on target proteins. Has weak NAD-dependent protein deacetylase activity; however this activity may not be physiologically relevant in vivo. The protein is NAD-dependent protein deacylase of Daphnia pulex (Water flea).